Reading from the N-terminus, the 193-residue chain is MLLIAGLGNPGSHYQNNRHNIGFMAVDAIHEAFSFSPWSKKFQAEVSNGLINGEKILLIKPQTFMNLSGQAIGEALRFYKLDLDHLIVFYDELDLPPGTVRVKIGGRSNGHNGIKSIDSHCGNNYHHVRLGIGRPISKELVDQYVLGNFTQSDQKWLSTLLGVIANNVAMLIKGDSNCFMNKISLTMKSQGLQ.

A tRNA-binding site is contributed by Tyr-14. The active-site Proton acceptor is the His-19. Residues Phe-64, Asn-66, and Asn-112 each coordinate tRNA.

The protein belongs to the PTH family. Monomer.

The protein localises to the cytoplasm. The enzyme catalyses an N-acyl-L-alpha-aminoacyl-tRNA + H2O = an N-acyl-L-amino acid + a tRNA + H(+). Hydrolyzes ribosome-free peptidyl-tRNAs (with 1 or more amino acids incorporated), which drop off the ribosome during protein synthesis, or as a result of ribosome stalling. Its function is as follows. Catalyzes the release of premature peptidyl moieties from peptidyl-tRNA molecules trapped in stalled 50S ribosomal subunits, and thus maintains levels of free tRNAs and 50S ribosomes. This Bartonella bacilliformis (strain ATCC 35685 / KC583 / Herrer 020/F12,63) protein is Peptidyl-tRNA hydrolase.